A 414-amino-acid polypeptide reads, in one-letter code: MESRVLTGGATAIRGGLPLLRKPAAVMKFTTAAHAISRDFPAGAVTAKPVGPLIAGPNLIWGRQLRPAILLETSPKRESIKPCSAAASSSAGSSDSSGDAKVGFFNKATLTTGFFFFMWYFLNVIFNILNKKIYNYFPYPYFVSVIHLAVGVVYCLVSWGVGLPKRAPIDSTQLKLLTPVAFCHALGHVTSNVSFAAVRVSFTHTVKALEPFFNAAASQFILGQQIPLALWLSLAPVVLGVSMASLTELSFNWLGFTSAMISNISFTYRSIYSKKAMTDMDSTNVYAYISIIALIFCLPPAIFIEGPQLLQHGFNDAIAKVGLTKFVTDLFWVGMFYHLYNQVATNTLERVAPLTHAVGNVLKRVFVIGFSIVIFGNKISTQTGIGTCIAIAGVAIYSFIKAKMEEEKRQKKAA.

A chloroplast-targeting transit peptide spans 1–78 (MESRVLTGGA…ILLETSPKRE (78 aa)). Residues 79 to 108 (SIKPCSAAASSSAGSSDSSGDAKVGFFNKA) are Chloroplast intermembrane-facing. The chain crosses the membrane as a helical span at residues 109–129 (TLTTGFFFFMWYFLNVIFNIL). The Lumenal segment spans residues 130–141 (NKKIYNYFPYPY). A helical transmembrane segment spans residues 142–162 (FVSVIHLAVGVVYCLVSWGVG). At 163–219 (LPKRAPIDSTQLKLLTPVAFCHALGHVTSNVSFAAVRVSFTHTVKALEPFFNAAASQ) the chain is on the chloroplast intermembrane side. A helical transmembrane segment spans residues 220–240 (FILGQQIPLALWLSLAPVVLG). At 241–284 (VSMASLTELSFNWLGFTSAMISNISFTYRSIYSKKAMTDMDSTN) the chain is on the lumenal side. A helical membrane pass occupies residues 285–304 (VYAYISIIALIFCLPPAIFI). At 305 to 382 (EGPQLLQHGF…VIFGNKISTQ (78 aa)) the chain is on the chloroplast intermembrane side. The chain crosses the membrane as a helical span at residues 383–403 (TGIGTCIAIAGVAIYSFIKAK). Over 404-414 (MEEEKRQKKAA) the chain is Lumenal.

Belongs to the TPT transporter family. TPT (TC 2.A.7.9) subfamily.

The protein localises to the plastid. It is found in the chloroplast membrane. Its function is as follows. Mediates the export of fixed carbons from the chloroplasts into the cytosol in the form of triose phosphates. In Solanum tuberosum (Potato), this protein is Triose phosphate/phosphate translocator, chloroplastic (TPT).